A 534-amino-acid chain; its full sequence is Prolyl 4-hydroxylase subunit alpha-1 (534 aa).

The first 17 residues, 1 to 17 (MIWVVLMMAILLPQSLA), serve as a signal peptide directing secretion. N-linked (GlcNAc...) asparagine glycosylation occurs at asparagine 113. The stretch at 205 to 238 (VSVLDYLSYAVYQQGDLDKALLLTKKLLELDPEH) is one TPR repeat. Asparagine 259 carries an N-linked (GlcNAc...) asparagine glycan. The region spanning 411 to 519 (TAEELQVANY…KWVSNKWLHE (109 aa)) is the Fe2OG dioxygenase domain. Fe cation is bound by residues histidine 429, aspartate 431, and histidine 500. Lysine 510 is a binding site for 2-oxoglutarate.

This sequence belongs to the P4HA family. As to quaternary structure, heterotetramer of two alpha-1 chains and two beta chains (P4HB)(the beta chain is the multi-functional PDI), where P4HB plays the role of a structural subunit; this tetramer catalyzes the formation of 4-hydroxyproline in collagen. Requires Fe(2+) as cofactor. The cofactor is L-ascorbate. As to expression, expressed at least in brain, heart and lung.

It is found in the endoplasmic reticulum lumen. The catalysed reaction is L-prolyl-[collagen] + 2-oxoglutarate + O2 = trans-4-hydroxy-L-prolyl-[collagen] + succinate + CO2. With respect to regulation, inhibited by poly(L-proline). Functionally, catalyzes the post-translational formation of 4-hydroxyproline in -Xaa-Pro-Gly- sequences in collagens and other proteins. The sequence is that of Prolyl 4-hydroxylase subunit alpha-1 (P4ha1) from Mus musculus (Mouse).